A 631-amino-acid polypeptide reads, in one-letter code: ATP-dependent DNA helicase 2 subunit 1 (631 aa).

Residues 262-487 (FYLGPNLSMS…VEFFQKIIKK (226 aa)) enclose the Ku domain. Residues 550-570 (AEPHKKRAAKSTTAGASGPKM) are disordered.

The protein belongs to the ku70 family. In terms of assembly, heterodimer of a 70 kDa and a 80 kDa subunit.

Its subcellular location is the nucleus. The protein localises to the chromosome. It carries out the reaction ATP + H2O = ADP + phosphate + H(+). Single-stranded DNA-dependent ATP-dependent helicase. Involved in non-homologous end joining (NHEJ) DNA double strand break repair. Sequence-specific DNA-binding protein that has a high affinity for a 31 bp sequence in the Yp1 gene. Site-specific DNA binding to 31 bp P element inverted repeats. The protein is ATP-dependent DNA helicase 2 subunit 1 (Irbp) of Drosophila melanogaster (Fruit fly).